Consider the following 310-residue polypeptide: tRNA-cytidine(32) 2-sulfurtransferase (310 aa).

A PP-loop motif motif is present at residues 45–50 (SGGKDS). C120, C123, and C211 together coordinate [4Fe-4S] cluster.

The protein belongs to the TtcA family. In terms of assembly, homodimer. Requires Mg(2+) as cofactor. It depends on [4Fe-4S] cluster as a cofactor.

Its subcellular location is the cytoplasm. It carries out the reaction cytidine(32) in tRNA + S-sulfanyl-L-cysteinyl-[cysteine desulfurase] + AH2 + ATP = 2-thiocytidine(32) in tRNA + L-cysteinyl-[cysteine desulfurase] + A + AMP + diphosphate + H(+). Its pathway is tRNA modification. Catalyzes the ATP-dependent 2-thiolation of cytidine in position 32 of tRNA, to form 2-thiocytidine (s(2)C32). The sulfur atoms are provided by the cysteine/cysteine desulfurase (IscS) system. The polypeptide is tRNA-cytidine(32) 2-sulfurtransferase (Shewanella baltica (strain OS155 / ATCC BAA-1091)).